We begin with the raw amino-acid sequence, 66 residues long: Toxin Tppa1 (66 aa).

One can recognise an LCN-type CS-alpha/beta domain in the interval K1–G63. 4 disulfide bridges follow: C11–C62, C15–C37, C23–C43, and C27–C45.

This sequence belongs to the long (4 C-C) scorpion toxin superfamily. Sodium channel inhibitor family. Beta subfamily. As to expression, expressed by the venom gland.

It is found in the secreted. In terms of biological role, beta toxins bind voltage-independently at site-4 of sodium channels (Nav) and shift the voltage of activation toward more negative potentials thereby affecting sodium channel activation and promoting spontaneous and repetitive firing. The protein is Toxin Tppa1 of Tityus pachyurus (Colombian scorpion).